The chain runs to 352 residues: Ion-translocating oxidoreductase complex subunit D (352 aa).

The next 4 helical transmembrane spans lie at 20-40 (IMLL…WFFG), 42-62 (GTLV…ALVL), 89-109 (IPPL…VIIA), and 123-143 (PAMI…TSWL). At T187 the chain carries FMN phosphoryl threonine. The next 5 helical transmembrane spans lie at 214 to 234 (ILAG…GVWL), 242 to 262 (WHIP…GWLF), 267 to 287 (LASP…FFIL), 301 to 321 (LIFG…GGYP), and 322 to 342 (DGVA…DYYT).

Belongs to the NqrB/RnfD family. The complex is composed of six subunits: RsxA, RsxB, RsxC, RsxD, RsxE and RsxG. The cofactor is FMN.

Its subcellular location is the cell inner membrane. Its function is as follows. Part of a membrane-bound complex that couples electron transfer with translocation of ions across the membrane. Required to maintain the reduced state of SoxR. This chain is Ion-translocating oxidoreductase complex subunit D, found in Escherichia coli O17:K52:H18 (strain UMN026 / ExPEC).